The sequence spans 77 residues: Large ribosomal subunit protein bL31 (77 aa).

Residues Cys-16, Cys-18, Cys-37, and Cys-40 each coordinate Zn(2+).

Belongs to the bacterial ribosomal protein bL31 family. Type A subfamily. As to quaternary structure, part of the 50S ribosomal subunit. The cofactor is Zn(2+).

Functionally, binds the 23S rRNA. The protein is Large ribosomal subunit protein bL31 of Pseudomonas fluorescens (strain SBW25).